The primary structure comprises 238 residues: MSSTALAVKGVEISFETTTLAFDCAVPAKRIVAVAGASGSGKSTLFNIIAGFEQPGRGEVRILGEEMTGRAPAERPVSIIFQEHNLFAHLDVATNVGFGISPALRLDAANRTKVEDALARVGLAGFGKRLPPTLSGGERQRVALARAFVRHRPILLLDEPFAALDPGMRAEMRALISDLHEEEGNTILMITHHPDDVRALADSVLFLDRGRIVAHDEVDRFLGRRDIAAINRFLGNEG.

Residues 1-234 (MSSTALAVKG…RDIAAINRFL (234 aa)) enclose the ABC transporter domain. 36–43 (GASGSGKS) lines the ATP pocket.

The protein belongs to the ABC transporter superfamily. Thiamine importer (TC 3.A.1.19.1) family. As to quaternary structure, the complex is composed of two ATP-binding proteins (ThiQ), two transmembrane proteins (ThiP) and a solute-binding protein (ThiB).

It localises to the cell inner membrane. It carries out the reaction thiamine(out) + ATP + H2O = thiamine(in) + ADP + phosphate + H(+). Part of the ABC transporter complex ThiBPQ involved in thiamine import. Responsible for energy coupling to the transport system. The protein is Thiamine import ATP-binding protein ThiQ of Rhizobium meliloti (strain 1021) (Ensifer meliloti).